Consider the following 326-residue polypeptide: Glycerol-3-phosphate dehydrogenase [NAD(P)+] (326 aa).

Trp13, Arg33, and Lys107 together coordinate NADPH. Sn-glycerol 3-phosphate-binding residues include Lys107, Gly135, and Ser137. Ala139 is an NADPH binding site. Sn-glycerol 3-phosphate contacts are provided by Lys190, Asp243, Ser253, Arg254, and Asn255. Residue Lys190 is the Proton acceptor of the active site. Position 254 (Arg254) interacts with NADPH. NADPH-binding residues include Leu273 and Glu275.

It belongs to the NAD-dependent glycerol-3-phosphate dehydrogenase family.

Its subcellular location is the cytoplasm. It carries out the reaction sn-glycerol 3-phosphate + NAD(+) = dihydroxyacetone phosphate + NADH + H(+). The enzyme catalyses sn-glycerol 3-phosphate + NADP(+) = dihydroxyacetone phosphate + NADPH + H(+). It participates in membrane lipid metabolism; glycerophospholipid metabolism. In terms of biological role, catalyzes the reduction of the glycolytic intermediate dihydroxyacetone phosphate (DHAP) to sn-glycerol 3-phosphate (G3P), the key precursor for phospholipid synthesis. The chain is Glycerol-3-phosphate dehydrogenase [NAD(P)+] from Brucella ovis (strain ATCC 25840 / 63/290 / NCTC 10512).